The sequence spans 308 residues: MPIRIPTELPAQSILNSENIFVMDTDRAAMQDIRPLEVGILNLMPNKMETEVQFLRLLSNTPLQINVDLIRIDNQAPKNTPESHMKAFYQNFDDVADKQYDGLIVTGAPLALLDYDDVKYWQKMKVVLEWAQRHVQSTLFSCWAAHAALYHFHGKNRRLRDEKLSGIFAHQVKDEHNELMRGFDPVFHAPHSRYGEISVADYESVEGLSVLASSEKTGAYIVASDDKRLVFVTGHPEYDPDSLDQEYKRDLKAGLTPNMPENYYPDDDPAQGPLVTWRAHGSLLFTNWLNYYVYQNTPYDLASLSNKA.

Catalysis depends on C142, which acts as the Acyl-thioester intermediate. Substrate is bound by residues K163 and S192. H235 serves as the catalytic Proton acceptor. The active site involves E237. R249 serves as a coordination point for substrate.

This sequence belongs to the MetA family.

The protein localises to the cytoplasm. It carries out the reaction L-homoserine + succinyl-CoA = O-succinyl-L-homoserine + CoA. Its pathway is amino-acid biosynthesis; L-methionine biosynthesis via de novo pathway; O-succinyl-L-homoserine from L-homoserine: step 1/1. In terms of biological role, transfers a succinyl group from succinyl-CoA to L-homoserine, forming succinyl-L-homoserine. This Pseudoalteromonas atlantica (strain T6c / ATCC BAA-1087) protein is Homoserine O-succinyltransferase.